Here is a 294-residue protein sequence, read N- to C-terminus: 4-diphosphocytidyl-2-C-methyl-D-erythritol kinase (294 aa).

K19 is an active-site residue. An ATP-binding site is contributed by 106 to 116 (PVASGIGGGSA). Residue D148 is part of the active site.

Belongs to the GHMP kinase family. IspE subfamily.

The enzyme catalyses 4-CDP-2-C-methyl-D-erythritol + ATP = 4-CDP-2-C-methyl-D-erythritol 2-phosphate + ADP + H(+). It functions in the pathway isoprenoid biosynthesis; isopentenyl diphosphate biosynthesis via DXP pathway; isopentenyl diphosphate from 1-deoxy-D-xylulose 5-phosphate: step 3/6. In terms of biological role, catalyzes the phosphorylation of the position 2 hydroxy group of 4-diphosphocytidyl-2C-methyl-D-erythritol. The protein is 4-diphosphocytidyl-2-C-methyl-D-erythritol kinase of Rhizobium etli (strain ATCC 51251 / DSM 11541 / JCM 21823 / NBRC 15573 / CFN 42).